Reading from the N-terminus, the 462-residue chain is Chitinase 1 (462 aa).

The N-terminal stretch at 1-17 (MILNLIILLAISIVASA) is a signal peptide. The GH18 domain maps to 18–291 (SNIAAYWGQN…NQLHQALSGS (274 aa)). A glycan (N-linked (GlcNAc...) asparagine) is linked at asparagine 57. Residue glutamate 147 is the Proton donor of the active site.

This sequence belongs to the glycosyl hydrolase 18 family. Chitinase class V subfamily.

The protein resides in the secreted. The enzyme catalyses Random endo-hydrolysis of N-acetyl-beta-D-glucosaminide (1-&gt;4)-beta-linkages in chitin and chitodextrins.. In terms of biological role, chitinase involved in the remodeling of chitin in the fungal cell wall. Plays a role in cell separation. This chain is Chitinase 1 (CHT1), found in Candida albicans (strain SC5314 / ATCC MYA-2876) (Yeast).